The primary structure comprises 360 residues: S-adenosylmethionine decarboxylase proenzyme (360 aa).

Residues E13 and E16 contribute to the active site. S73 functions as the Schiff-base intermediate with substrate; via pyruvic acid in the catalytic mechanism. S73 is subject to Pyruvic acid (Ser); by autocatalysis. C87 acts as the Proton donor; for catalytic activity in catalysis. Catalysis depends on proton acceptor; for processing activity residues S236 and H249.

Belongs to the eukaryotic AdoMetDC family. It depends on pyruvate as a cofactor. In terms of processing, is synthesized initially as an inactive proenzyme. Formation of the active enzyme involves a self-maturation process in which the active site pyruvoyl group is generated from an internal serine residue via an autocatalytic post-translational modification. Two non-identical subunits are generated from the proenzyme in this reaction, and the pyruvate is formed at the N-terminus of the alpha chain, which is derived from the carboxyl end of the proenzyme. The post-translation cleavage follows an unusual pathway, termed non-hydrolytic serinolysis, in which the side chain hydroxyl group of the serine supplies its oxygen atom to form the C-terminus of the beta chain, while the remainder of the serine residue undergoes an oxidative deamination to produce ammonia and the pyruvoyl group blocking the N-terminus of the alpha chain. In terms of tissue distribution, stolon, also expressed in leaves, stems and roots.

The enzyme catalyses S-adenosyl-L-methionine + H(+) = S-adenosyl 3-(methylsulfanyl)propylamine + CO2. It participates in amine and polyamine biosynthesis; S-adenosylmethioninamine biosynthesis; S-adenosylmethioninamine from S-adenosyl-L-methionine: step 1/1. The sequence is that of S-adenosylmethionine decarboxylase proenzyme (SAMDC) from Solanum tuberosum (Potato).